Consider the following 82-residue polypeptide: Small ribosomal subunit protein uS17 (82 aa).

The protein belongs to the universal ribosomal protein uS17 family. Part of the 30S ribosomal subunit.

Its function is as follows. One of the primary rRNA binding proteins, it binds specifically to the 5'-end of 16S ribosomal RNA. In Shewanella frigidimarina (strain NCIMB 400), this protein is Small ribosomal subunit protein uS17.